The following is a 299-amino-acid chain: GTPase Era (299 aa).

In terms of domain architecture, Era-type G spans 5 to 175; the sequence is RSGFVCFVGR…TNVLVSQLPP (171 aa). Residues 13–20 form a G1 region; the sequence is GRPNTGKS. 13-20 lines the GTP pocket; the sequence is GRPNTGKS. A G2 region spans residues 39-43; the sequence is QTTRH. The segment at 60–63 is G3; it reads DTPG. Residues 60 to 64 and 124 to 127 each bind GTP; these read DTPGL and TKID. The interval 124–127 is G4; that stretch reads TKID. Residues 154-156 form a G5 region; sequence VSA. A KH type-2 domain is found at 206–285; the sequence is VRDELPHSLA…YLDLRVKIAK (80 aa).

This sequence belongs to the TRAFAC class TrmE-Era-EngA-EngB-Septin-like GTPase superfamily. Era GTPase family. Monomer. Stays in the monomer conformation, irrespective of the presence of GTP.

The protein resides in the cell envelope. The protein localises to the secreted. It is found in the cell wall. With respect to regulation, co-purified with RNA upon overexpression in E.coli, but RNAs do not appear to influence the GTPase activity. In terms of biological role, exhibits GTPase activity. Binds RNA but is probably not involved in ribosome assembly in mycobacteria. Cannot use ATP. The protein is GTPase Era of Mycolicibacterium smegmatis (strain ATCC 700084 / mc(2)155) (Mycobacterium smegmatis).